We begin with the raw amino-acid sequence, 496 residues long: Cytochrome P450 monooxygenase cle4 (496 aa).

A helical transmembrane segment spans residues 12 to 34; that stretch reads FFTSPFPLTVGILSISLSGVLWY. Cys-435 contributes to the heme binding site.

This sequence belongs to the cytochrome P450 family. Heme serves as cofactor.

It is found in the membrane. It participates in secondary metabolite biosynthesis; terpenoid biosynthesis. In terms of biological role, cytochrome P450 monooxygenase; part of the cluster A that mediates the biosynthesis of chevalone E and its oxidized derivatives that possess a unique five-membered lactone ring and can synergistically enhance the cytotoxicity of doxorubicin (DOX) in breast cancer cells. Within the pathway, cle4 is involved in hydroxylation of the chavalone E scaffold at positions C-11 and C-12 and contributes with cle2 to the production of seven oxidation derivatives. The molecular scaffold is commonly biosynthesized by a series of enzymes including the non-reducing polyketide synthase (NR-PKS) cle1 that produces the alpha-pyrone triacetic acid lactone (TAL); The membrane-bound prenyltransferase cle5 that accepts TAL as its substrate to perform a C-3 geranylgeranylation reaction, in which the pathway-dedicated GGPS cle6 is required to provide GGPP, the other substrate of cle5; the FAD-dependent monooxygenase Cle3 that forms an (S)-epoxide ring at the terminal olefin of the geranylgeranyl group; and the terpene cyclase Cle7 that catalyzes the cyclization of the prenyl group that yields the pentacyclic pathway intermediate chevalone E. Chevalone E can derivatize into seven new oxidized analogs by the cytochrome P450 monooxygenases cle2 (acting at C-20) and cle4 (acting at C-11 and C-12). The chain is Cytochrome P450 monooxygenase cle4 from Aspergillus versicolor.